Reading from the N-terminus, the 550-residue chain is Protein UshA (550 aa).

A signal peptide spans M1 to A25. Positions 41, 43, 84, 116, 217, 252, and 254 each coordinate Zn(2+). Residues C258 and C275 are joined by a disulfide bond. Substrate-binding positions include R375–R379 and F498–D504.

Belongs to the 5'-nucleotidase family. Monomer. Requires Zn(2+) as cofactor.

It is found in the periplasm. It catalyses the reaction UDP-sugar + H2O = UMP + alpha-D-aldose 1-phosphate.. It carries out the reaction a ribonucleoside 5'-phosphate + H2O = a ribonucleoside + phosphate. Its activity is regulated as follows. The activity of this protein is inhibited by an intracellular protein inhibitor. Degradation of external UDP-glucose to uridine monophosphate and glucose-1-phosphate, which can then be used by the cell. This Escherichia coli (strain K12) protein is Protein UshA (ushA).